A 196-amino-acid chain; its full sequence is Nucleoside triphosphate pyrophosphatase (196 aa).

Residue D73 is the Proton acceptor of the active site.

This sequence belongs to the Maf family. The cofactor is a divalent metal cation.

Its subcellular location is the cytoplasm. It catalyses the reaction a ribonucleoside 5'-triphosphate + H2O = a ribonucleoside 5'-phosphate + diphosphate + H(+). It carries out the reaction a 2'-deoxyribonucleoside 5'-triphosphate + H2O = a 2'-deoxyribonucleoside 5'-phosphate + diphosphate + H(+). Its function is as follows. Nucleoside triphosphate pyrophosphatase. May have a dual role in cell division arrest and in preventing the incorporation of modified nucleotides into cellular nucleic acids. This is Nucleoside triphosphate pyrophosphatase from Chlamydia pneumoniae (Chlamydophila pneumoniae).